The primary structure comprises 158 residues: NAD(P)H-quinone oxidoreductase subunit J, chloroplastic (158 aa).

This sequence belongs to the complex I 30 kDa subunit family. NDH is composed of at least 16 different subunits, 5 of which are encoded in the nucleus.

It is found in the plastid. The protein resides in the chloroplast thylakoid membrane. It carries out the reaction a plastoquinone + NADH + (n+1) H(+)(in) = a plastoquinol + NAD(+) + n H(+)(out). The catalysed reaction is a plastoquinone + NADPH + (n+1) H(+)(in) = a plastoquinol + NADP(+) + n H(+)(out). Its function is as follows. NDH shuttles electrons from NAD(P)H:plastoquinone, via FMN and iron-sulfur (Fe-S) centers, to quinones in the photosynthetic chain and possibly in a chloroplast respiratory chain. The immediate electron acceptor for the enzyme in this species is believed to be plastoquinone. Couples the redox reaction to proton translocation, and thus conserves the redox energy in a proton gradient. The protein is NAD(P)H-quinone oxidoreductase subunit J, chloroplastic of Lotus japonicus (Lotus corniculatus var. japonicus).